Reading from the N-terminus, the 336-residue chain is Foldase protein PrsA (336 aa).

Residues 1–22 (MKSAKKLLSVLCLGIFILTFTA) form the signal peptide. Cys23 carries N-palmitoyl cysteine lipidation. Residue Cys23 is the site of S-diacylglycerol cysteine attachment. One can recognise a PpiC domain in the interval 194–286 (PNTMNVSHIL…FGYHIIKINS (93 aa)).

It belongs to the PrsA family.

The protein resides in the cell membrane. The enzyme catalyses [protein]-peptidylproline (omega=180) = [protein]-peptidylproline (omega=0). In terms of biological role, plays a major role in protein secretion by helping the post-translocational extracellular folding of several secreted proteins. This chain is Foldase protein PrsA, found in Clostridium botulinum (strain Kyoto / Type A2).